A 570-amino-acid chain; its full sequence is Putative pyruvate decarboxylase C3G9.11c (570 aa).

2 residues coordinate pyruvate: aspartate 30 and histidine 119. Thiamine diphosphate contacts are provided by residues threonine 396 and 419–421; that span reads GSI. Aspartate 451 serves as a coordination point for Mg(2+). Residues 452 to 453 and 478 to 483 each bind thiamine diphosphate; these read GS and NKGYTI. Mg(2+) contacts are provided by asparagine 478 and glycine 480. Residue glutamate 484 participates in pyruvate binding.

The protein belongs to the TPP enzyme family. Homotetramer. Requires Mg(2+) as cofactor. Thiamine diphosphate serves as cofactor.

The protein resides in the cytoplasm. The protein localises to the nucleus. It catalyses the reaction a 2-oxocarboxylate + H(+) = an aldehyde + CO2. It carries out the reaction pyruvate + H(+) = acetaldehyde + CO2. The sequence is that of Putative pyruvate decarboxylase C3G9.11c from Schizosaccharomyces pombe (strain 972 / ATCC 24843) (Fission yeast).